A 554-amino-acid polypeptide reads, in one-letter code: (Z)-gamma-bisabolene synthase 1 (554 aa).

Positions 306, 310, 450, and 458 each coordinate Mg(2+). A DDXXD motif motif is present at residues D306–D310.

The protein belongs to the terpene synthase family. Tpsa subfamily. Mg(2+) is required as a cofactor. Requires Mn(2+) as cofactor. Predominantly expressed in roots. Expressed in the cortex and the sub-epidermal layers of roots. Also detected in leaf hydathodes and flower stigmata.

It is found in the cytoplasm. It catalyses the reaction (2E,6E)-farnesyl diphosphate = (Z)-gamma-bisabolene + diphosphate. The protein operates within secondary metabolite biosynthesis; terpenoid biosynthesis. Its function is as follows. Involved in sesquiterpene (C15) biosynthesis. The major product is (Z)-gamma-bisabolene with minor amounts of (E)-nerolidol and alpha-bisabolol. This is (Z)-gamma-bisabolene synthase 1 (TPS12) from Arabidopsis thaliana (Mouse-ear cress).